The chain runs to 186 residues: Small ribosomal subunit protein uS5 (186 aa).

The S5 DRBM domain occupies 20–83 (FVDKLVHINR…EAAKRDMIFV (64 aa)).

It belongs to the universal ribosomal protein uS5 family. In terms of assembly, part of the 30S ribosomal subunit. Contacts proteins S4 and S8.

Its function is as follows. With S4 and S12 plays an important role in translational accuracy. Functionally, located at the back of the 30S subunit body where it stabilizes the conformation of the head with respect to the body. This chain is Small ribosomal subunit protein uS5, found in Brucella abortus (strain S19).